The following is a 497-amino-acid chain: Di-/tripeptide transporter (497 aa).

12 helical membrane-spanning segments follow: residues 3–23 (AILLFYMYYAVTKGGLGMSQT), 26–46 (ASIMSIYGSLVYLSTLVGGWL), 57–77 (VFYGGVLIMLGHIVLALPAGV), 84–104 (IALIVVGTGLLKPNVSDMVGG), 119–139 (IFVFGINLGSIIAPWLVPWAA), 155–175 (AGFSLAAVGMFFGLVQYVLGG), 199–219 (IKWVVIIIIAIVAILAAMAGV), 227–247 (VITLLTILAIALPIYYFVMMF), 294–314 (FIILIALIIMASILIPNKVII), 321–341 (LVLLVFYWIGLNLIPFSTFVL), 372–392 (GIEIPLFLRQLIINIFTLIIL), and 452–472 (IVIIIFYLVKMAALWWAWSYI).

Belongs to the major facilitator superfamily. Proton-dependent oligopeptide transporter (POT/PTR) (TC 2.A.17) family.

The protein localises to the cell membrane. In terms of biological role, proton-dependent uptake of di- or tri-peptides. The polypeptide is Di-/tripeptide transporter (dtpT) (Lactobacillus helveticus (Lactobacillus suntoryeus)).